The following is a 162-amino-acid chain: RNA pyrophosphohydrolase (162 aa).

The region spanning 7–149 is the Nudix hydrolase domain; that stretch reads EYRPCVGIML…KKEVYKKVIE (143 aa). Residues 40–61 carry the Nudix box motif; that stretch reads GGVDEGEELEQAALRELLEEVG.

Belongs to the Nudix hydrolase family. RppH subfamily. A divalent metal cation serves as cofactor.

Accelerates the degradation of transcripts by removing pyrophosphate from the 5'-end of triphosphorylated RNA, leading to a more labile monophosphorylated state that can stimulate subsequent ribonuclease cleavage. The protein is RNA pyrophosphohydrolase of Wolbachia pipientis subsp. Culex pipiens (strain wPip).